The chain runs to 113 residues: U11-theraphotoxin-Hhn1d (113 aa).

The signal sequence occupies residues 1–21 (MNTVRVTFLLVFVVAVSLGQA). A propeptide spanning residues 22 to 74 (DKDENRMEMKDKTEQGKSYLHFAENLLLQKLEDVEAKLLEKDSEKSINSRQKR) is cleaved from the precursor. 3 cysteine pairs are disulfide-bonded: cysteine 75/cysteine 90, cysteine 82/cysteine 95, and cysteine 89/cysteine 110.

Belongs to the neurotoxin 14 (magi-1) family. 01 (HNTX-16) subfamily. In terms of tissue distribution, expressed by the venom gland.

It is found in the secreted. In terms of biological role, probable ion channel inhibitor. The sequence is that of U11-theraphotoxin-Hhn1d from Cyriopagopus hainanus (Chinese bird spider).